A 298-amino-acid polypeptide reads, in one-letter code: Tyrosine recombinase XerC (298 aa).

A Core-binding (CB) domain is found at Met1–Thr85. Residues His106–Met291 form the Tyr recombinase domain. Residues Arg146, Lys170, His243, Arg246, and His269 contribute to the active site. Tyr278 serves as the catalytic O-(3'-phospho-DNA)-tyrosine intermediate.

Belongs to the 'phage' integrase family. XerC subfamily. In terms of assembly, forms a cyclic heterotetrameric complex composed of two molecules of XerC and two molecules of XerD.

It is found in the cytoplasm. Site-specific tyrosine recombinase, which acts by catalyzing the cutting and rejoining of the recombining DNA molecules. The XerC-XerD complex is essential to convert dimers of the bacterial chromosome into monomers to permit their segregation at cell division. It also contributes to the segregational stability of plasmids. This chain is Tyrosine recombinase XerC, found in Lacticaseibacillus paracasei (strain ATCC 334 / BCRC 17002 / CCUG 31169 / CIP 107868 / KCTC 3260 / NRRL B-441) (Lactobacillus paracasei).